The sequence spans 448 residues: UDP-N-acetylmuramoylalanine--D-glutamate ligase (448 aa).

116 to 122 contacts ATP; sequence GSNAKST.

The protein belongs to the MurCDEF family.

It is found in the cytoplasm. It catalyses the reaction UDP-N-acetyl-alpha-D-muramoyl-L-alanine + D-glutamate + ATP = UDP-N-acetyl-alpha-D-muramoyl-L-alanyl-D-glutamate + ADP + phosphate + H(+). It participates in cell wall biogenesis; peptidoglycan biosynthesis. In terms of biological role, cell wall formation. Catalyzes the addition of glutamate to the nucleotide precursor UDP-N-acetylmuramoyl-L-alanine (UMA). This chain is UDP-N-acetylmuramoylalanine--D-glutamate ligase, found in Pseudomonas fluorescens (strain ATCC BAA-477 / NRRL B-23932 / Pf-5).